Here is a 191-residue protein sequence, read N- to C-terminus: ATP synthase subunit b 1 (191 aa).

A helical transmembrane segment spans residues 7-25; the sequence is RMRILCLCATTLLMAGSAL.

The protein belongs to the ATPase B chain family. F-type ATPases have 2 components, F(1) - the catalytic core - and F(0) - the membrane proton channel. F(1) has five subunits: alpha(3), beta(3), gamma(1), delta(1), epsilon(1). F(0) has three main subunits: a(1), b(2) and c(10-14). The alpha and beta chains form an alternating ring which encloses part of the gamma chain. F(1) is attached to F(0) by a central stalk formed by the gamma and epsilon chains, while a peripheral stalk is formed by the delta and b chains.

It is found in the cell inner membrane. In terms of biological role, f(1)F(0) ATP synthase produces ATP from ADP in the presence of a proton or sodium gradient. F-type ATPases consist of two structural domains, F(1) containing the extramembraneous catalytic core and F(0) containing the membrane proton channel, linked together by a central stalk and a peripheral stalk. During catalysis, ATP synthesis in the catalytic domain of F(1) is coupled via a rotary mechanism of the central stalk subunits to proton translocation. Functionally, component of the F(0) channel, it forms part of the peripheral stalk, linking F(1) to F(0). This is ATP synthase subunit b 1 from Syntrophotalea carbinolica (strain DSM 2380 / NBRC 103641 / GraBd1) (Pelobacter carbinolicus).